A 348-amino-acid polypeptide reads, in one-letter code: Protein RecA (348 aa).

66–73 (GPESSGKT) provides a ligand contact to ATP.

This sequence belongs to the RecA family.

It is found in the cytoplasm. In terms of biological role, can catalyze the hydrolysis of ATP in the presence of single-stranded DNA, the ATP-dependent uptake of single-stranded DNA by duplex DNA, and the ATP-dependent hybridization of homologous single-stranded DNAs. It interacts with LexA causing its activation and leading to its autocatalytic cleavage. The polypeptide is Protein RecA (Neisseria meningitidis serogroup C / serotype 2a (strain ATCC 700532 / DSM 15464 / FAM18)).